Reading from the N-terminus, the 35-residue chain is Phospholipase A2 neuwieditoxin-1 (35 aa).

Tyr-27, Gly-29, and Gly-31 together coordinate Ca(2+).

The protein belongs to the phospholipase A2 family. Group II subfamily. D49 sub-subfamily. In terms of assembly, dimer. Ca(2+) serves as cofactor. Expressed by the venom gland.

Its subcellular location is the secreted. The enzyme catalyses a 1,2-diacyl-sn-glycero-3-phosphocholine + H2O = a 1-acyl-sn-glycero-3-phosphocholine + a fatty acid + H(+). Snake venom phospholipase A2 (PLA2) that shows presynaptic neurotoxicity. 10 ug/ml of this protein produce complete neuromuscular blockade up to 80 minutes, without inhibiting the responses to acetylcholine (ACh) and potassium chloride (KCl). In addition, it produces a calcium-dependent blockade of acetylcholine release and causes appearance of giant miniature end-plate potentials. PLA2 catalyzes the calcium-dependent hydrolysis of the 2-acyl groups in 3-sn-phosphoglycerides. This Bothrops pauloensis (Neuwied's lancehead) protein is Phospholipase A2 neuwieditoxin-1.